A 117-amino-acid chain; its full sequence is Immunoglobulin heavy variable 5-51 (117 aa).

A signal peptide spans 1-19; it reads MGSTAILALLLAVLQGVCA. Residues 20-44 are framework-1; the sequence is EVQLVQSGAEVKKPGESLKISCKGS. The Ig-like domain occupies 20 to 117; sequence EVQLVQSGAE…SDTAMYYCAR (98 aa). A disulfide bridge links Cys41 with Cys115. The interval 45-52 is complementarity-determining-1; that stretch reads GYSFTSYW. The interval 53–69 is framework-2; the sequence is IGWVRQMPGKGLEWMGI. Residues 70–77 are complementarity-determining-2; the sequence is IYPGDSDT. The segment at 78–115 is framework-3; the sequence is RYSPSFQGQVTISADKSISTAYLQWSSLKASDTAMYYC. Positions 116–117 are complementarity-determining-3; it reads AR.

As to quaternary structure, immunoglobulins are composed of two identical heavy chains and two identical light chains; disulfide-linked.

It is found in the secreted. Its subcellular location is the cell membrane. V region of the variable domain of immunoglobulin heavy chains that participates in the antigen recognition. Immunoglobulins, also known as antibodies, are membrane-bound or secreted glycoproteins produced by B lymphocytes. In the recognition phase of humoral immunity, the membrane-bound immunoglobulins serve as receptors which, upon binding of a specific antigen, trigger the clonal expansion and differentiation of B lymphocytes into immunoglobulins-secreting plasma cells. Secreted immunoglobulins mediate the effector phase of humoral immunity, which results in the elimination of bound antigens. The antigen binding site is formed by the variable domain of one heavy chain, together with that of its associated light chain. Thus, each immunoglobulin has two antigen binding sites with remarkable affinity for a particular antigen. The variable domains are assembled by a process called V-(D)-J rearrangement and can then be subjected to somatic hypermutations which, after exposure to antigen and selection, allow affinity maturation for a particular antigen. In Homo sapiens (Human), this protein is Immunoglobulin heavy variable 5-51.